Reading from the N-terminus, the 165-residue chain is MVNPTVFFDIAVDGEPLGRVSFELFADKVPKTAENFRALSTGEKGFGYKGSCFHRIIPGFMCQGGDFTRHNGTGGKSIYGEKFEDENFILKHTGPGILSMANAGPNTNGSQFFICTAKTEWLDGKHVVFGKVKEGMNIVEAMERFGSRNGKTSKKITIADCGQLE.

Methionine 1 bears the N-acetylmethionine mark. N-acetylvaline; in Peptidyl-prolyl cis-trans isomerase A, N-terminally processed is present on valine 2. One can recognise a PPIase cyclophilin-type domain in the interval phenylalanine 7–glutamine 163. N6-acetyllysine; alternate is present on lysine 28. Lysine 28 participates in a covalent cross-link: Glycyl lysine isopeptide (Lys-Gly) (interchain with G-Cter in SUMO2); alternate. Lysine 28 is covalently cross-linked (Glycyl lysine isopeptide (Lys-Gly) (interchain with G-Cter in ubiquitin); alternate). Lysine 44 and lysine 76 each carry N6-acetyllysine. At serine 77 the chain carries Phosphoserine. Residue lysine 82 is modified to N6-acetyllysine; alternate. Residue lysine 82 forms a Glycyl lysine isopeptide (Lys-Gly) (interchain with G-Cter in SUMO2); alternate linkage. Threonine 93 carries the post-translational modification Phosphothreonine. Residue asparagine 108 is glycosylated (N-linked (GlcNAc...) asparagine). 3 positions are modified to N6-acetyllysine: lysine 125, lysine 131, and lysine 133.

It belongs to the cyclophilin-type PPIase family. PPIase A subfamily. Interacts with protein phosphatase PPP3CA/calcineurin A. Interacts with isoform 2 of BSG/CD147. Interacts with FOXO1; the interaction promotes FOXO1 dephosphorylation, nuclear accumulation and transcriptional activity. Interacts with integrin ITGA2B:ITGB3; the interaction is ROS and peptidyl-prolyl cis-trans isomerase (PPIase) activity-dependent and is increased in the presence of thrombin. Interacts with MAP3K5. Interacts with TARDBP; the interaction is dependent on the RNA-binding activity of TARDBP and the PPIase activity of PPIA/CYPA and the acetylation of PPIA/CYPA at Lys-125 favors the interaction. Interacts with HNRNPA1, HNRNPA2B1, HNRNPC, RBMX, HNRNPK and HNRNPM. In terms of processing, acetylation at Lys-125 markedly inhibits catalysis of cis to trans isomerization. PPIA acetylation also antagonizes the immunosuppressive effects of cyclosporine by inhibiting the sequential steps of cyclosporine binding and calcineurin inhibition. Acetylation at Lys-125 favors the interaction with TARDBP.

The protein resides in the cytoplasm. It is found in the secreted. It localises to the nucleus. It catalyses the reaction [protein]-peptidylproline (omega=180) = [protein]-peptidylproline (omega=0). With respect to regulation, binds cyclosporin A (CsA). CsA mediates some of its effects via an inhibitory action on PPIase. Catalyzes the cis-trans isomerization of proline imidic peptide bonds in oligopeptides. Exerts a strong chemotactic effect on leukocytes partly through activation of one of its membrane receptors BSG/CD147, initiating a signaling cascade that culminates in MAPK/ERK activation. Activates endothelial cells (ECs) in a proinflammatory manner by stimulating activation of NF-kappa-B and ERK, JNK and p38 MAP-kinases and by inducing expression of adhesion molecules including SELE and VCAM1. Induces apoptosis in ECs by promoting the FOXO1-dependent expression of CCL2 and BCL2L11 which are involved in EC chemotaxis and apoptosis. In response to oxidative stress, initiates proapoptotic and antiapoptotic signaling in ECs via activation of NF-kappa-B and AKT1 and up-regulation of antiapoptotic protein BCL2. Negatively regulates MAP3K5/ASK1 kinase activity, autophosphorylation and oxidative stress-induced apoptosis mediated by MAP3K5/ASK1. Necessary for the assembly of TARDBP in heterogeneous nuclear ribonucleoprotein (hnRNP) complexes and regulates TARDBP binding to RNA UG repeats and TARDBP-dependent expression of HDAC6, ATG7 and VCP which are involved in clearance of protein aggregates. Plays an important role in platelet activation and aggregation. Regulates calcium mobilization and integrin ITGA2B:ITGB3 bidirectional signaling via increased ROS production as well as by facilitating the interaction between integrin and the cell cytoskeleton. Binds heparan sulfate glycosaminoglycans. The chain is Peptidyl-prolyl cis-trans isomerase A (PPIA) from Symphalangus syndactylus (Siamang).